A 232-amino-acid chain; its full sequence is Lipoprotein-releasing system ATP-binding protein LolD (232 aa).

Positions 6–231 (ISCENLNKVY…KLTIKESQHV (226 aa)) constitute an ABC transporter domain. 42 to 49 (GSSGSGKS) contacts ATP.

Belongs to the ABC transporter superfamily. Lipoprotein translocase (TC 3.A.1.125) family. In terms of assembly, the complex is composed of two ATP-binding proteins (LolD) and two transmembrane proteins (LolC and LolE).

It is found in the cell inner membrane. Part of the ABC transporter complex LolCDE involved in the translocation of mature outer membrane-directed lipoproteins, from the inner membrane to the periplasmic chaperone, LolA. Responsible for the formation of the LolA-lipoprotein complex in an ATP-dependent manner. The polypeptide is Lipoprotein-releasing system ATP-binding protein LolD (Pseudoalteromonas translucida (strain TAC 125)).